We begin with the raw amino-acid sequence, 353 residues long: Rhodopsin (353 aa).

The Extracellular segment spans residues 1–36 (MNGTEGPYFYVPMVNTSGIVRSPYEYPQYYLVNPAA). N-linked (GlcNAc...) asparagine glycosylation is found at asparagine 2 and asparagine 15. Residues 37-61 (YARLGAYMFLLILVGFPINFLTLYV) form a helical membrane-spanning segment. Residues 62–73 (TIEHKKLRTPLN) are Cytoplasmic-facing. A helical transmembrane segment spans residues 74–96 (YILLNLAVADLFMVFGGFTTTMY). The Extracellular segment spans residues 97 to 110 (TSMHGYFVLGRLGC). An intrachain disulfide couples cysteine 110 to cysteine 187. A helical transmembrane segment spans residues 111-133 (NIEGFFATLGGEIALWSLVVLAI). Residues 134–136 (ERW) carry the 'Ionic lock' involved in activated form stabilization motif. At 134–152 (ERWVVVCKPISNFRFGENH) the chain is on the cytoplasmic side. Residues 153 to 173 (AIMGLAFTWLMALACAAPPLV) form a helical membrane-spanning segment. Topologically, residues 174-202 (GWSRYIPEGMQCSCGIDYYTRAEGFNNES) are extracellular. N-linked (GlcNAc...) asparagine glycosylation occurs at asparagine 200. A helical transmembrane segment spans residues 203–224 (FVIYMFVCHFTVPLMVVFFCYG). Over 225-252 (RLLCAVKEAAAAQQESETTQRAEREVTR) the chain is Cytoplasmic. Residues 253–274 (MVIMMVVAFLVCWLPYASVAWW) traverse the membrane as a helical segment. At 275-286 (IFTHQGSEFGPV) the chain is on the extracellular side. Residues 287–308 (FMTIPAFFAKSSSIYNPMIYIC) form a helical membrane-spanning segment. An N6-(retinylidene)lysine modification is found at lysine 296. The Cytoplasmic portion of the chain corresponds to 309–353 (LNKQFRHCMITTLCCGKNPFEEEEGASTASKTEASSVSSSSVSPA). S-palmitoyl cysteine attachment occurs at residues cysteine 322 and cysteine 323. Residues 331–353 (EEGASTASKTEASSVSSSSVSPA) are disordered. A compositionally biased stretch (low complexity) spans 334–353 (ASTASKTEASSVSSSSVSPA).

The protein belongs to the G-protein coupled receptor 1 family. Opsin subfamily. Phosphorylated on some or all of the serine and threonine residues present in the C-terminal region. Post-translationally, contains one covalently linked retinal chromophore.

The protein resides in the membrane. It localises to the cell projection. The protein localises to the cilium. Its subcellular location is the photoreceptor outer segment. Functionally, photoreceptor required for image-forming vision at low light intensity. While most salt water fish species use retinal as chromophore, most freshwater fish use 3-dehydroretinal, or a mixture of retinal and 3-dehydroretinal. Light-induced isomerization of 11-cis to all-trans retinal triggers a conformational change that activates signaling via G-proteins. Subsequent receptor phosphorylation mediates displacement of the bound G-protein alpha subunit by arrestin and terminates signaling. This Sarpa salpa (Salema) protein is Rhodopsin (rho).